The following is a 180-amino-acid chain: Oligoribonuclease (180 aa).

The region spanning 7 to 170 (LIWIDLEMTG…SDIQDSIDEL (164 aa)) is the Exonuclease domain. Residue Y128 is part of the active site.

The protein belongs to the oligoribonuclease family.

It is found in the cytoplasm. 3'-to-5' exoribonuclease specific for small oligoribonucleotides. The sequence is that of Oligoribonuclease from Ruthia magnifica subsp. Calyptogena magnifica.